The primary structure comprises 278 residues: Bifunctional protein FolD (278 aa).

NADP(+) is bound by residues 165–167 (GRS), Ser190, and Thr231.

It belongs to the tetrahydrofolate dehydrogenase/cyclohydrolase family. As to quaternary structure, homodimer.

It catalyses the reaction (6R)-5,10-methylene-5,6,7,8-tetrahydrofolate + NADP(+) = (6R)-5,10-methenyltetrahydrofolate + NADPH. The enzyme catalyses (6R)-5,10-methenyltetrahydrofolate + H2O = (6R)-10-formyltetrahydrofolate + H(+). It participates in one-carbon metabolism; tetrahydrofolate interconversion. Functionally, catalyzes the oxidation of 5,10-methylenetetrahydrofolate to 5,10-methenyltetrahydrofolate and then the hydrolysis of 5,10-methenyltetrahydrofolate to 10-formyltetrahydrofolate. This Clostridium acetobutylicum (strain ATCC 824 / DSM 792 / JCM 1419 / IAM 19013 / LMG 5710 / NBRC 13948 / NRRL B-527 / VKM B-1787 / 2291 / W) protein is Bifunctional protein FolD.